A 326-amino-acid polypeptide reads, in one-letter code: Malate dehydrogenase (326 aa).

An NAD(+)-binding site is contributed by 11-17 (GAAGQIG). Substrate-binding residues include R92 and R98. NAD(+) contacts are provided by residues N105, Q112, and 129 to 131 (VGN). N131 and R162 together coordinate substrate. H187 (proton acceptor) is an active-site residue.

It belongs to the LDH/MDH superfamily. MDH type 2 family.

The catalysed reaction is (S)-malate + NAD(+) = oxaloacetate + NADH + H(+). In terms of biological role, catalyzes the reversible oxidation of malate to oxaloacetate. In Leptospira interrogans serogroup Icterohaemorrhagiae serovar Lai (strain 56601), this protein is Malate dehydrogenase.